We begin with the raw amino-acid sequence, 356 residues long: MKMRTIAKTSLALGLLTTGAITVTTQSVKAEKIQSTKVDKVPTLKAERLAMINITAGANSATTQAANTRQERTPKLEKAPNTNEEKTSASKIEKISQPKQEEQKTLNISATPAPKQEQSQTTTESTTPKTKVTTPPSTNTPQPMQSTKSDTPQSPTIKQAQTDMTPKYEDLRAYYTKPSFEFEKQFGFMLKPWTTVRFMNVIPNRFIYKIALVGKDEKKYKDGPYDNIDVFIVLEDNKYQLKKYSVGGITKTNSKKVNHKVELSITKKDNQGMISRDVSEYMITKEEISLKELDFKLRKQLIEKHNLYGNMGSGTIVIKMKNGGKYTFELHKKLQEHRMADVIDGTNIDNIEVNIK.

An N-terminal signal peptide occupies residues 1 to 30 (MKMRTIAKTSLALGLLTTGAITVTTQSVKA). A disordered region spans residues 61 to 165 (ATTQAANTRQ…TIKQAQTDMT (105 aa)). Positions 69–104 (RQERTPKLEKAPNTNEEKTSASKIEKISQPKQEEQK) are enriched in basic and acidic residues. Residues 114–141 (PKQEQSQTTTESTTPKTKVTTPPSTNTP) are compositionally biased toward low complexity. Positions 142-164 (QPMQSTKSDTPQSPTIKQAQTDM) are enriched in polar residues. Residues 228 to 326 (IDVFIVLEDN…VIKMKNGGKY (99 aa)) are sialyl Lewis X-binding.

Belongs to the staphylococcal/streptococcal toxin family. In terms of assembly, interacts with host TLR2 (via its extracellular domain).

Its subcellular location is the secreted. Secreted protein that plays an essential role in immune innate response inhibition by interacting with and inhibiting host TLR2. In turn, bacteria recognition by immune cells is impaired and cytokine production is inhibited. Mechanistically, by interacting with TLR2, blocks ligand binding and thus inhibits activation. Second, by interacting with an already formed TLR2-lipopeptide complex, prevents TLR heterodimerization and downstream signaling. The interaction with host TLR2 does not involve sialyl Lewis X interactions. The chain is Staphylococcal superantigen-like 3 from Staphylococcus aureus (strain NCTC 8325 / PS 47).